Here is a 95-residue protein sequence, read N- to C-terminus: Protein Vpr (95 aa).

Positions 1-42 are homooligomerization; it reads MERAPEDAGPQREPYNEWALELLEELKNEAVRHFPRIWLHGL. 3 positions are modified to phosphoserine; by host: S79, S93, and S95.

Belongs to the HIV-1 VPR protein family. As to quaternary structure, homooligomer, may form homodimer. Interacts with p6-gag region of the Pr55 Gag precursor protein through a (Leu-X-X)4 motif near the C-terminus of the P6gag protein. Interacts with host UNG. May interact with host RAD23A/HHR23A. Interacts with host VPRBP/DCAF1, leading to hijack the CUL4A-RBX1-DDB1-DCAF1/VPRBP complex, mediating ubiquitination of host proteins such as TERT and ZGPAT and arrest of the cell cycle in G2 phase. Post-translationally, phosphorylated on several residues by host. These phosphorylations regulate VPR activity for the nuclear import of the HIV-1 pre-integration complex.

It is found in the virion. It localises to the host nucleus. Its subcellular location is the host extracellular space. Functionally, during virus replication, may deplete host UNG protein, and incude G2-M cell cycle arrest. Acts by targeting specific host proteins for degradation by the 26S proteasome, through association with the cellular CUL4A-DDB1 E3 ligase complex by direct interaction with host VPRPB/DCAF-1. Cell cycle arrest reportedly occurs within hours of infection and is not blocked by antiviral agents, suggesting that it is initiated by the VPR carried into the virion. Additionally, VPR induces apoptosis in a cell cycle dependent manner suggesting that these two effects are mechanistically linked. Detected in the serum and cerebrospinal fluid of AIDS patient, VPR may also induce cell death to bystander cells. During virus entry, plays a role in the transport of the viral pre-integration (PIC) complex to the host nucleus. This function is crucial for viral infection of non-dividing macrophages. May act directly at the nuclear pore complex, by binding nucleoporins phenylalanine-glycine (FG)-repeat regions. The chain is Protein Vpr from Human immunodeficiency virus type 1 group N (isolate YBF30) (HIV-1).